The following is a 176-amino-acid chain: Ribosome maturation factor RimM (176 aa).

The PRC barrel domain occupies 95 to 169 (EDEVYLFELE…TARIAPPPGL (75 aa)).

Belongs to the RimM family. As to quaternary structure, binds ribosomal protein uS19.

It localises to the cytoplasm. An accessory protein needed during the final step in the assembly of 30S ribosomal subunit, possibly for assembly of the head region. Essential for efficient processing of 16S rRNA. May be needed both before and after RbfA during the maturation of 16S rRNA. It has affinity for free ribosomal 30S subunits but not for 70S ribosomes. This is Ribosome maturation factor RimM from Nitratidesulfovibrio vulgaris (strain ATCC 29579 / DSM 644 / CCUG 34227 / NCIMB 8303 / VKM B-1760 / Hildenborough) (Desulfovibrio vulgaris).